Here is a 220-residue protein sequence, read N- to C-terminus: Ripening-related protein grip22 (220 aa).

Positions 1 to 27 are cleaved as a signal peptide; the sequence is MAKSALVWLASVCLVFNILSLPFLALG.

Belongs to the kiwellin family. Expressed in ripening fruits.

The protein resides in the secreted. The sequence is that of Ripening-related protein grip22 (grip22) from Vitis vinifera (Grape).